We begin with the raw amino-acid sequence, 120 residues long: Large ribosomal subunit protein bL20 (120 aa).

It belongs to the bacterial ribosomal protein bL20 family.

Functionally, binds directly to 23S ribosomal RNA and is necessary for the in vitro assembly process of the 50S ribosomal subunit. It is not involved in the protein synthesizing functions of that subunit. The protein is Large ribosomal subunit protein bL20 of Ligilactobacillus salivarius (strain UCC118) (Lactobacillus salivarius).